A 236-amino-acid chain; its full sequence is Small ribosomal subunit protein uS2c (236 aa).

This sequence belongs to the universal ribosomal protein uS2 family.

It is found in the plastid. Its subcellular location is the chloroplast. The polypeptide is Small ribosomal subunit protein uS2c (rps2) (Oenothera parviflora (Small-flowered evening primrose)).